A 740-amino-acid chain; its full sequence is Ribosome-releasing factor 2, mitochondrial (740 aa).

The N-terminal 29 residues, 1–29, are a transit peptide targeting the mitochondrion; that stretch reads MLKYAWQSGPKQSNRWLWHLSNQIWKRSY. The tr-type G domain occupies 31 to 310; sequence SKIRNIGILA…AVNAYLPAPE (280 aa). Residues 40-47, 104-108, and 158-161 contribute to the GTP site; these read AHIDAGKT, DTPGH, and NKMD.

Belongs to the TRAFAC class translation factor GTPase superfamily. Classic translation factor GTPase family. EF-G/EF-2 subfamily.

The protein localises to the mitochondrion. Functionally, mitochondrial GTPase that mediates the disassembly of ribosomes from messenger RNA at the termination of mitochondrial protein biosynthesis. Not involved in the GTP-dependent ribosomal translocation step during translation elongation. This is Ribosome-releasing factor 2, mitochondrial from Drosophila melanogaster (Fruit fly).